Reading from the N-terminus, the 889-residue chain is Terminal uridylyltransferase 3 (889 aa).

The C2H2-type; atypical zinc-finger motif lies at 123 to 151; sequence VRCDLCAKMIESRDEEQIQEHFQVHHAAL. Zn(2+) is bound by residues cysteine 125, cysteine 128, histidine 143, and histidine 148. UTP-binding positions include serine 225 and 236 to 239; that span reads SDAD. Mg(2+)-binding residues include aspartate 237 and aspartate 239. Arginine 286 lines the RNA pocket. UTP is bound by residues 394–398, lysine 419, lysine 423, and 437–438; these read GVRNS and SY. Residues 505–572 enclose the PAP-associated domain; sequence LGGLIPLFFL…LCIDDPYEDN (68 aa). Positions 565–574 match the Nucleotide recognition motif (NRM) motif; it reads IDDPYEDNFN. 2 disordered regions span residues 675–702 and 829–849; these read NNKSKEGDDDAEGVTNNQEGEPPDHVES and RKKSKGSKKRKNAVRRGNHAG. Residues 829-846 are compositionally biased toward basic residues; it reads RKKSKGSKKRKNAVRRGN.

It belongs to the DNA polymerase type-B-like family. Mg(2+) is required as a cofactor. It depends on Mn(2+) as a cofactor.

It localises to the cytoplasm. It catalyses the reaction RNA(n) + UTP = RNA(n)-3'-uridine ribonucleotide + diphosphate. Its function is as follows. Terminal uridylyltransferase which catalyzes the addition of Us to the 3'-hydroxyl group of single-stranded RNAs. Does not mediate RNA-independent UTP polymerization. In Trypanosoma brucei brucei, this protein is Terminal uridylyltransferase 3.